Reading from the N-terminus, the 256-residue chain is Thiazole synthase (256 aa).

Lysine 95 acts as the Schiff-base intermediate with DXP in catalysis. 1-deoxy-D-xylulose 5-phosphate-binding positions include glycine 156, 182–183 (AG), and 204–205 (NT).

It belongs to the ThiG family. Homotetramer. Forms heterodimers with either ThiH or ThiS.

It is found in the cytoplasm. The catalysed reaction is [ThiS sulfur-carrier protein]-C-terminal-Gly-aminoethanethioate + 2-iminoacetate + 1-deoxy-D-xylulose 5-phosphate = [ThiS sulfur-carrier protein]-C-terminal Gly-Gly + 2-[(2R,5Z)-2-carboxy-4-methylthiazol-5(2H)-ylidene]ethyl phosphate + 2 H2O + H(+). It participates in cofactor biosynthesis; thiamine diphosphate biosynthesis. Catalyzes the rearrangement of 1-deoxy-D-xylulose 5-phosphate (DXP) to produce the thiazole phosphate moiety of thiamine. Sulfur is provided by the thiocarboxylate moiety of the carrier protein ThiS. In vitro, sulfur can be provided by H(2)S. In Escherichia coli O17:K52:H18 (strain UMN026 / ExPEC), this protein is Thiazole synthase.